The primary structure comprises 288 residues: Pteridine reductase 1 (288 aa).

17–40 is an NADP(+) binding site; sequence RLGRSIAEGLHAEGYAVCLHYHRS. S175 serves as a coordination point for substrate. The active-site Proton acceptor is the Y194.

Belongs to the short-chain dehydrogenases/reductases (SDR) family. In terms of assembly, homotetramer.

It catalyses the reaction (6R)-L-erythro-5,6,7,8-tetrahydrobiopterin + 2 NADP(+) = L-erythro-biopterin + 2 NADPH + 2 H(+). Its pathway is cofactor biosynthesis; tetrahydrobiopterin biosynthesis; tetrahydrobiopterin from biopterin: step 1/1. Functionally, exhibits a NADPH-dependent biopterin reductase activity. Has good activity with folate and significant activity with dihydrofolate and dihydrobiopterin, but not with quinonoid dihydrobiopterin. Confers resistance to methotrexate (MTX). The protein is Pteridine reductase 1 (PTR1) of Leishmania major.